Here is a 636-residue protein sequence, read N- to C-terminus: MAKHQFQTEVGQLLHLMTHSLYSNKEIFIRELVSNASDAIDKLNYLRLTDENLKDKYAQWKGEINISFDEKDKSLSIIDNGIGMNEADLIASIGTIAKSGTKSFVEALTGDAKKDSNLIGQFGVGFYSVFMVADKVDVISKKAGEEQAYKWSSTGTGEFDLTPCTKESNGTVIYIKLKDEEAGEFASKYRIKNIVEKYSNHIAYPIFLNYDEEVSEALSEEDEKAGKKPEKKIERKHEQINAATALWMQPKAKLKEQDYNDFYKSISHDSSDPMLTIHTKTEGVNEYTTLFYIPKIAPMDMYRADFQSGVKLYVKRVFITDDEKELLPTYLRFVRGIIDSEDLPLNVSREILQENRILANIKQGSVKKILAEIKKLSKDEEKYAEFVAQYIRPLKEGVYQDYTNKEAILELLRYKSSKTEAGKMTSLEAYKERANSEQKAIYYIVGENEKVLRNSPLLESYKKNDIEVLILDDKEIDEIITPAIGAFKEWEFKDITAIEPPKVEQSEEEKKEVEEKFQDILSKIKDKLGDAVKDVKVTSRLSESPSCVVKDAADAQMAAMAHMFRAMGQAMPESAPILEINPEHEIVKKLNGCADEATIEDVSWILLDQAKLSEGMEITDTVAFAQRLSRITAKAL.

Residues 1–349 (MAKHQFQTEV…SEDLPLNVSR (349 aa)) are a; substrate-binding. The b stretch occupies residues 350–562 (EILQENRILA…ADAQMAAMAH (213 aa)). The segment at 563-636 (MFRAMGQAMP…RLSRITAKAL (74 aa)) is c.

Belongs to the heat shock protein 90 family. Homodimer.

The protein localises to the cytoplasm. Its function is as follows. Molecular chaperone. Has ATPase activity. In Aliarcobacter butzleri (strain RM4018) (Arcobacter butzleri), this protein is Chaperone protein HtpG.